A 312-amino-acid polypeptide reads, in one-letter code: Malate dehydrogenase (312 aa).

NAD(+) is bound by residues 12–17 (GAGFTG) and aspartate 36. Substrate is bound by residues arginine 87 and arginine 93. NAD(+) contacts are provided by residues asparagine 100 and 123–125 (LTN). Residue asparagine 125 coordinates substrate. Serine 149 carries the post-translational modification Phosphoserine. Arginine 156 lines the substrate pocket. Histidine 180 (proton acceptor) is an active-site residue.

It belongs to the LDH/MDH superfamily. MDH type 3 family. In terms of assembly, homotetramer.

The catalysed reaction is (S)-malate + NAD(+) = oxaloacetate + NADH + H(+). Its function is as follows. Catalyzes the reversible oxidation of malate to oxaloacetate. The polypeptide is Malate dehydrogenase (Bacillus israeli).